We begin with the raw amino-acid sequence, 2178 residues long: DNA-directed RNA polymerase subunit beta (2178 aa).

3 insert regions span residues 269-325 (SKKI…TPFV), 714-1508 (KRID…LFYN), and 1703-1900 (KGND…LQPM).

The protein belongs to the RNA polymerase beta chain family. In plastids the minimal PEP RNA polymerase catalytic core is composed of four subunits: alpha, beta, beta', and beta''. When a (nuclear-encoded) sigma factor is associated with the core the holoenzyme is formed, which can initiate transcription.

Its subcellular location is the plastid. The protein localises to the chloroplast. The enzyme catalyses RNA(n) + a ribonucleoside 5'-triphosphate = RNA(n+1) + diphosphate. DNA-dependent RNA polymerase catalyzes the transcription of DNA into RNA using the four ribonucleoside triphosphates as substrates. This Tupiella akineta (Green alga) protein is DNA-directed RNA polymerase subunit beta.